Here is a 761-residue protein sequence, read N- to C-terminus: MNQMLFVTKRNGKIELINLDKIHRVLNWAAKGLENISISQVALKSRIQFYNNIKTTIIHETIIKAAADLISENSPDYQYMAARLTIFHLRKKAFGQFNPPNLYDHVKNMIKLEKYDQHLLNDYPKQDFLIMNSFIKHRRDMNFSYAAVKQLEGKYLIQNRVTKKIYESAQFLYILISACLFSKYPNETRMKYIKNFYDAISTFKISLPTPIMAGLRTPTRQFSSCVLIESEDNLNSINATTSAIVKYVSQRAGIGINAGRIRALGSPIRNGDTLHTGCIPFYKHFQSAVKSCSQGGVRGGAATIFYPIWHFEIESLLVLKNNRGIEENRVRHMDYSVQLNKLMYQRLILGEHITLFSPSDVPNLYDSFFNNQEKFERLYIKYENDKTIRKKKVKASYLFSLMMQERTSTGRIYIQNVDHCNSHSAFNPKIAPIRQSNLCLEITLPTKALQDVHDKNGEISLCTLSAINLGSLNNLNDLSKLSNLIVRALDSVLDYQEYPILSAKKSALSRRTLGIGVINFAYYLAKNGVRYSDGSANNLTHRTFEAIQYHLLNASCVLAQEKGACHWFSHTNYYKGILPIDTYKKNVDEICNEPLHLDWELLRKKIKKYGLRNSTLSALMPSETSSQISNATNGIEPPRGLISIKASKDGMLRQVVPEYKRLKNNYELLWNIPNNTGYLQLASIMQKFVDQSISANTNYDPKLFPNNKIPMQQLILDLLTAYKLGLKTLYYQNTRDGASDHQTEDIQFSKNENCNHGACKI.

An ATP-cone domain is found at 5-95 (LFVTKRNGKI…IFHLRKKAFG (91 aa)). ATP contacts are provided by residues lysine 9, 15–21 (ELINLDK), threonine 55, and lysine 91. Threonine 209 provides a ligand contact to GDP. A disulfide bond links cysteine 225 and cysteine 462. Residues 232–234 (DNL), arginine 262, and arginine 269 contribute to the dTTP site. Asparagine 437 serves as a coordination point for GDP. The Proton acceptor role is filled by asparagine 437. Residue cysteine 439 is the Cysteine radical intermediate of the active site. GDP contacts are provided by residues glutamate 441 and 623-625 (ETS). Glutamate 441 serves as the catalytic Proton acceptor.

The protein belongs to the ribonucleoside diphosphate reductase large chain family. Tetramer of two alpha and two beta subunits.

The enzyme catalyses a 2'-deoxyribonucleoside 5'-diphosphate + [thioredoxin]-disulfide + H2O = a ribonucleoside 5'-diphosphate + [thioredoxin]-dithiol. Its activity is regulated as follows. Under complex allosteric control mediated by deoxynucleoside triphosphates and ATP binding to separate specificity and activation sites on the alpha subunit. The type of nucleotide bound at the specificity site determines substrate preference. It seems probable that ATP makes the enzyme reduce CDP and UDP, dGTP favors ADP reduction and dTTP favors GDP reduction. Stimulated by ATP and inhibited by dATP binding to the activity site. In terms of biological role, provides the precursors necessary for DNA synthesis. Catalyzes the biosynthesis of deoxyribonucleotides from the corresponding ribonucleotides. This is Ribonucleoside-diphosphate reductase subunit alpha (nrdA) from Buchnera aphidicola subsp. Baizongia pistaciae (strain Bp).